The primary structure comprises 641 residues: MPAITLPDGSVRRFDGPVTGTMVAESIGPGLARAALAMEVDGALVDLSREIADDASVRFITRKDDAALEMIRHDTAHVLAEAVQSLWPGTQVTIGPSIENGFYYDFYRNEPFTPEDFPAIEARMREIVAANARFEREVWPRDEAIRFFENRGERFKAELIRDLPESEPISIYRQGEWLDLCRGPHLRGTADVGSAFKLMKVAGAYWRGDHRNPMLTRIYGTAWRDQKELDAHLHRLEEAERRDHRRIGREMDLFHIQEEAVGSIFWHPKGWRLYTALQDYMRRAQTRGGYQEVRTPQLVDRALWEASGHWDKYREHMFIATVEDEDKTLALKPMNCPCHVQIFRHGLRSYRELPLRMAEFGACHRYEPSGALHGIMRVRSFTQDDAHIFCTESQIAAETARFVRMLAEVYADLGFESFRVKFADRPEQRAGSDETWDRAEGALIEACRLAGVEYEYNPGEGAFYGPKLEFVLRDAIGRDWQCGTLQVDYVLPERLDASFVGEDSARHRPVMLHRAILGSFERFLGILIEQHAGRFPLWLAPVQVVVASIVTDAAPYAEQVAETLTQAGLVVETDIRNEKINAKVREHSLARVPVILVVGRKEAEDGTVAIRRLGGAAQEVMSLADAATALAAEALPPDLRR.

Residues 1–61 (MPAITLPDGS…ADDASVRFIT (61 aa)) form the TGS domain. The tract at residues 243 to 536 (DHRRIGREMD…LIEQHAGRFP (294 aa)) is catalytic. Zn(2+)-binding residues include Cys336, His387, and His513.

Belongs to the class-II aminoacyl-tRNA synthetase family. In terms of assembly, homodimer. It depends on Zn(2+) as a cofactor.

It localises to the cytoplasm. The catalysed reaction is tRNA(Thr) + L-threonine + ATP = L-threonyl-tRNA(Thr) + AMP + diphosphate + H(+). Its function is as follows. Catalyzes the attachment of threonine to tRNA(Thr) in a two-step reaction: L-threonine is first activated by ATP to form Thr-AMP and then transferred to the acceptor end of tRNA(Thr). Also edits incorrectly charged L-seryl-tRNA(Thr). The chain is Threonine--tRNA ligase from Gluconacetobacter diazotrophicus (strain ATCC 49037 / DSM 5601 / CCUG 37298 / CIP 103539 / LMG 7603 / PAl5).